The chain runs to 169 residues: Ribonuclease H (169 aa).

One can recognise an RNase H type-1 domain in the interval 3–159 (AHAALTLYTD…CDRLATDAAR (157 aa)). Mg(2+) is bound by residues aspartate 12, glutamate 63, aspartate 87, and aspartate 151.

It belongs to the RNase H family. In terms of assembly, monomer. It depends on Mg(2+) as a cofactor.

It localises to the cytoplasm. It catalyses the reaction Endonucleolytic cleavage to 5'-phosphomonoester.. Endonuclease that specifically degrades the RNA of RNA-DNA hybrids. This is Ribonuclease H from Treponema pallidum subsp. pallidum (strain SS14).